Consider the following 157-residue polypeptide: NADPH-dependent 7-cyano-7-deazaguanine reductase (157 aa).

Cysteine 55 acts as the Thioimide intermediate in catalysis. The Proton donor role is filled by aspartate 62. Substrate is bound by residues 77 to 79 (VES) and 96 to 97 (HE).

Belongs to the GTP cyclohydrolase I family. QueF type 1 subfamily.

It is found in the cytoplasm. The enzyme catalyses 7-aminomethyl-7-carbaguanine + 2 NADP(+) = 7-cyano-7-deazaguanine + 2 NADPH + 3 H(+). The protein operates within tRNA modification; tRNA-queuosine biosynthesis. Catalyzes the NADPH-dependent reduction of 7-cyano-7-deazaguanine (preQ0) to 7-aminomethyl-7-deazaguanine (preQ1). This Neisseria meningitidis serogroup C / serotype 2a (strain ATCC 700532 / DSM 15464 / FAM18) protein is NADPH-dependent 7-cyano-7-deazaguanine reductase.